Here is a 264-residue protein sequence, read N- to C-terminus: Apolipoprotein A-I (264 aa).

Positions 1-18 (MKAVVLTVAVLFLTGSQA) are cleaved as a signal peptide. 2 consecutive repeat copies span residues 67–88 (LKLL…EQIG) and 89–110 (PVSQ…QEMN). The 10 X approximate tandem repeats stretch occupies residues 67–264 (LKLLDNWDSL…DEATKKLNTQ (198 aa)). The residue at position 109 (M109) is a Methionine sulfoxide. A 3; half-length repeat occupies 111-121 (KDLEEVKRKVQ). Repeat copies occupy residues 122–143 (PYLD…QQVE), 144–165 (PLSK…EKLS), and 166–187 (PLGQ…THLA). A 7; truncated repeat occupies 188–207 (PYSDELRQRLAARLEALKEG). The stretch at 208–229 (SSFAEYQAKATEHLSALGEKAK) is repeat 8. A 9; half-length repeat occupies 230–240 (PALEDLRQGLL). Copy 10 of the repeat occupies 241–264 (PVLESLKLSFWSAVDEATKKLNTQ).

This sequence belongs to the apolipoprotein A1/A4/E family. As to quaternary structure, homodimer. Interacts with APOA1BP and CLU. Component of a sperm activating protein complex (SPAP), consisting of APOA1, an immunoglobulin heavy chain, an immunoglobulin light chain and albumin. Interacts with NDRG1. Interacts with SCGB3A2. Interacts with NAXE and YJEFN3. In terms of processing, glycosylated. Palmitoylated. Post-translationally, phosphorylation sites are present in the extracellular medium.

Its subcellular location is the secreted. Functionally, participates in the reverse transport of cholesterol from tissues to the liver for excretion by promoting cholesterol efflux from tissues and by acting as a cofactor for the lecithin cholesterol acyltransferase (LCAT). As part of the SPAP complex, activates spermatozoa motility. The chain is Apolipoprotein A-I (APOA1) from Ictidomys tridecemlineatus (Thirteen-lined ground squirrel).